The sequence spans 440 residues: ATP-dependent protease ATPase subunit HslU (440 aa).

ATP is bound by residues V18, 60–65 (GVGKTE), D253, E318, and R390.

The protein belongs to the ClpX chaperone family. HslU subfamily. A double ring-shaped homohexamer of HslV is capped on each side by a ring-shaped HslU homohexamer. The assembly of the HslU/HslV complex is dependent on binding of ATP.

The protein resides in the cytoplasm. Its function is as follows. ATPase subunit of a proteasome-like degradation complex; this subunit has chaperone activity. The binding of ATP and its subsequent hydrolysis by HslU are essential for unfolding of protein substrates subsequently hydrolyzed by HslV. HslU recognizes the N-terminal part of its protein substrates and unfolds these before they are guided to HslV for hydrolysis. This Methylococcus capsulatus (strain ATCC 33009 / NCIMB 11132 / Bath) protein is ATP-dependent protease ATPase subunit HslU.